The primary structure comprises 358 residues: MKQIQVNLGVRSYPIYIGQNLMSDGETLSRYLLKKRILIVTNETVAPLYLKQIQETMASFGEVESVILPDGEQFKDLAHLDTIFTALLQQNYGRDSVLVALGGGVIGDMTGFAAACYQRGIDFIQIPTTLLSQVDSSVGGKTAVNHPLGKNMIGAFYQPQIVLIDTLCLHTLPAREFAAGMAEVIKYGIMWDADFFQWLEDNVTTLKTLDAQALVYAISRCCEIKADVVSQDETEQGVRALLNLGHTFGHAIEAEMGYGNWLHGEAVSAGTVLAAQTAKALGLIDESIVCRIIQLLQAFDLPVSAPESMDFDSFIQHMRRDKKVLGGQIRLVLPTAIGRADVFSQVTESTLEQVIRCA.

NAD(+)-binding positions include 70 to 75, 104 to 108, 128 to 129, Lys-141, Lys-150, and 168 to 171; these read DGEQFK, GVIGD, TT, and CLHT. Zn(2+)-binding residues include Glu-183, His-246, and His-263.

This sequence belongs to the sugar phosphate cyclases superfamily. Dehydroquinate synthase family. Co(2+) is required as a cofactor. It depends on Zn(2+) as a cofactor. The cofactor is NAD(+).

Its subcellular location is the cytoplasm. It catalyses the reaction 7-phospho-2-dehydro-3-deoxy-D-arabino-heptonate = 3-dehydroquinate + phosphate. It functions in the pathway metabolic intermediate biosynthesis; chorismate biosynthesis; chorismate from D-erythrose 4-phosphate and phosphoenolpyruvate: step 2/7. Functionally, catalyzes the conversion of 3-deoxy-D-arabino-heptulosonate 7-phosphate (DAHP) to dehydroquinate (DHQ). The chain is 3-dehydroquinate synthase from Shewanella baltica (strain OS185).